Reading from the N-terminus, the 265-residue chain is Deoxycytidine kinase 1 (265 aa).

30 to 38 (GNIAAGKST) contacts ATP. Residues Glu-55, Tyr-88, and Gln-99 each contribute to the substrate site. Glu-129 serves as the catalytic Proton acceptor. Substrate contacts are provided by Arg-130 and Asp-135. An ATP-binding site is contributed by 190-194 (RVYTR). Glu-199 serves as a coordination point for substrate. Position 242–244 (242–244 (EDF)) interacts with ATP.

Belongs to the DCK/DGK family. In terms of assembly, homodimer.

The protein resides in the nucleus. The enzyme catalyses 2'-deoxycytidine + a ribonucleoside 5'-triphosphate = dCMP + a ribonucleoside 5'-diphosphate + H(+). The catalysed reaction is 2'-deoxyguanosine + ATP = dGMP + ADP + H(+). It carries out the reaction 2'-deoxyadenosine + ATP = dAMP + ADP + H(+). Phosphorylates the deoxyribonucleosides deoxyadenosine, deoxycytidine and deoxyguanosine with highest activity against deoxycytidine followed by deadenosine and deoxyguanosine. Shows only very minor activity against deoxyuridine and deoxythymidine. This Xenopus laevis (African clawed frog) protein is Deoxycytidine kinase 1.